Reading from the N-terminus, the 20-residue chain is Octopamine receptor (20 aa).

This sequence belongs to the G-protein coupled receptor 1 family.

The protein resides in the cell membrane. Putative receptor for octopamine. Octopamine (OA) is a neurotransmitter, neurohormone, and neuromodulator in invertebrates. The activity of this receptor is mediated by G proteins which activate adenylyl cyclase. The polypeptide is Octopamine receptor (Photinus pyralis (Common eastern firefly)).